The sequence spans 543 residues: MVLTFMTATRRRPVVLIVRDGWGQNPDPKWNESNAVHLANTPVDDKLTQEYPSVLIHTSGEDVGLPAGVMGNSEVGHQNIGAGRIVDQEVMRITRAIRDDSFFSNPVVTGAIDHVKKSGGRLHLLGLMSDGRVHSDLQHGIAVIDLAKRNGLTGDQLAIHAITDGRDTSPRGGLKFVSQLTDHCEASGVGVVASVIGRFYAMDRDLRWERVEAAYNLMTQGTGQTFPSASAAIESYYANPTESSRDGDEFITASSIVPEGGSPITVQPGDAVLFMNYRGDRTREITKAFTFDDAAWKDIPGGGFDRGKKIDNLYFATMTGYETGLPVKVIFEKPAKMPNILGEYVASKGLHQFRCAETEKYPHVTFFFNDYRDNPFEEEEWGMAPSPRDVSTYDQKPEMSAEDITEKVLKQIKSGKCDMIIVNYANGDMVGHTGVLEAAIKAVEKVDACVGRVVDATLAAGGSLVVTADHGNCEQMIDPETGGPHTAHTTYQVPLIVVDPEFVGKPLREGGRLADIAPTVLALMGLEVPPEMTGRPLMETQTA.

Positions 20 and 73 each coordinate Mn(2+). Ser73 serves as the catalytic Phosphoserine intermediate. Residues His134, 166–167 (RD), Arg198, Arg204, 278–281 (RGDR), and Lys360 contribute to the substrate site. Mn(2+) is bound by residues Asp428, His432, Asp469, His470, and His488.

The protein belongs to the BPG-independent phosphoglycerate mutase family. As to quaternary structure, monomer. It depends on Mn(2+) as a cofactor.

The catalysed reaction is (2R)-2-phosphoglycerate = (2R)-3-phosphoglycerate. Its pathway is carbohydrate degradation; glycolysis; pyruvate from D-glyceraldehyde 3-phosphate: step 3/5. Catalyzes the interconversion of 2-phosphoglycerate and 3-phosphoglycerate. The chain is 2,3-bisphosphoglycerate-independent phosphoglycerate mutase from Rhodopirellula baltica (strain DSM 10527 / NCIMB 13988 / SH1).